The chain runs to 182 residues: NADH-quinone oxidoreductase subunit B (182 aa).

[4Fe-4S] cluster is bound by residues Cys47, Cys48, Cys113, and Cys142.

This sequence belongs to the complex I 20 kDa subunit family. As to quaternary structure, NDH-1 is composed of 14 different subunits. Subunits NuoB, C, D, E, F, and G constitute the peripheral sector of the complex. The cofactor is [4Fe-4S] cluster.

Its subcellular location is the cell inner membrane. The catalysed reaction is a quinone + NADH + 5 H(+)(in) = a quinol + NAD(+) + 4 H(+)(out). In terms of biological role, NDH-1 shuttles electrons from NADH, via FMN and iron-sulfur (Fe-S) centers, to quinones in the respiratory chain. The immediate electron acceptor for the enzyme in this species is believed to be ubiquinone. Couples the redox reaction to proton translocation (for every two electrons transferred, four hydrogen ions are translocated across the cytoplasmic membrane), and thus conserves the redox energy in a proton gradient. The polypeptide is NADH-quinone oxidoreductase subunit B (Anaeromyxobacter dehalogenans (strain 2CP-1 / ATCC BAA-258)).